Reading from the N-terminus, the 451-residue chain is Methionine aminopeptidase 2-2 (451 aa).

Residues 1 to 101 (MAAKVADDVA…IDEVFPNDSY (101 aa)) are disordered. Over residues 37-51 (EHEDSDDDNEAEEGA) the composition is skewed to acidic residues. Residues 60–73 (KKKKKRKPRKKKKA) show a composition bias toward basic residues. His204 contributes to the substrate binding site. 3 residues coordinate a divalent metal cation: Asp224, Asp235, and His304. His312 lines the substrate pocket. 2 residues coordinate a divalent metal cation: Glu337 and Glu432.

Belongs to the peptidase M24A family. Methionine aminopeptidase eukaryotic type 2 subfamily. Requires Co(2+) as cofactor. It depends on Zn(2+) as a cofactor. Mn(2+) is required as a cofactor. Fe(2+) serves as cofactor.

The protein localises to the cytoplasm. It carries out the reaction Release of N-terminal amino acids, preferentially methionine, from peptides and arylamides.. Functionally, cotranslationally removes the N-terminal methionine from nascent proteins. The N-terminal methionine is often cleaved when the second residue in the primary sequence is small and uncharged (Met-Ala-, Cys, Gly, Pro, Ser, Thr, or Val). The polypeptide is Methionine aminopeptidase 2-2 (Pyrenophora tritici-repentis (strain Pt-1C-BFP) (Wheat tan spot fungus)).